The chain runs to 159 residues: ATP synthase subunit b 2 (159 aa).

Residues 1–21 (MDATFWAFIALVIFVAIVVYM) traverse the membrane as a helical segment.

The protein belongs to the ATPase B chain family. In terms of assembly, F-type ATPases have 2 components, F(1) - the catalytic core - and F(0) - the membrane proton channel. F(1) has five subunits: alpha(3), beta(3), gamma(1), delta(1), epsilon(1). F(0) has three main subunits: a(1), b(2) and c(10-14). The alpha and beta chains form an alternating ring which encloses part of the gamma chain. F(1) is attached to F(0) by a central stalk formed by the gamma and epsilon chains, while a peripheral stalk is formed by the delta and b chains.

The protein resides in the cell inner membrane. In terms of biological role, f(1)F(0) ATP synthase produces ATP from ADP in the presence of a proton or sodium gradient. F-type ATPases consist of two structural domains, F(1) containing the extramembraneous catalytic core and F(0) containing the membrane proton channel, linked together by a central stalk and a peripheral stalk. During catalysis, ATP synthesis in the catalytic domain of F(1) is coupled via a rotary mechanism of the central stalk subunits to proton translocation. Its function is as follows. Component of the F(0) channel, it forms part of the peripheral stalk, linking F(1) to F(0). In Brucella abortus (strain S19), this protein is ATP synthase subunit b 2.